A 430-amino-acid chain; its full sequence is Peptidoglycan DD-endopeptidase ShyA (430 aa).

An N-terminal signal peptide occupies residues 1 to 35 (MISKSIILRFSELSMRKKATLVGLPLLAVAAISSS). Residues His297, Asp301, and His378 each contribute to the Zn(2+) site.

This sequence belongs to the peptidase M23B family. Zn(2+) is required as a cofactor.

The protein localises to the periplasm. The protein operates within cell wall degradation; peptidoglycan degradation. With respect to regulation, reduced activity in 0.5 mM EDTA and a complete loss of activity at higher EDTA concentrations. The effect of EDTA can be reversed by addition of 1 mM ZnCl(2). Conformational switching between open (catalytically active) and closed (catalytically inactive) conformation of this protein is suggested mechanism of its regulation. The signal or inducer of the conformational shift to the open form unmasking the active site is currently not understood. In terms of biological role, cell wall peptidoglycan (PG) DD-endopeptidase essential for cell growth and elongation. Hydrolyzes peptide cross-links which covalently connect adjacent PG strands probably to allow insertion of new glycans and thus cell wall expansion. Degrades purified whole PG sacculi in vitro. Releases predominantly short glycan chains from the PG. Cleaves D,D cross-linked muropeptides specifically preferring dimeric tetrapeptide-tetrapeptide (D44) substrates and has only little activity on dimeric tetrapeptide-pentapeptide (D45) substrates. Also converts more than 50% of tetrapeptide-tripeptide (D43) to product as well as more than 50% of D43M, which contains D-Met instead of D-Ala in the fourth position of the acceptor moiety. Cleaves the D,D bond between diaminopimelic acid (DAP) and D-Ala of the PG substrate in vitro. No cleavage of L,D bond connecting two DAP moieties. This is Peptidoglycan DD-endopeptidase ShyA from Vibrio cholerae serotype O1 (strain ATCC 39315 / El Tor Inaba N16961).